The primary structure comprises 948 residues: RNA polymerase-associated protein RapA (948 aa).

A Helicase ATP-binding domain is found at 164–332 (EVADRSAPRV…FARLRLLDPN (169 aa)). 177–184 (DEVGLGKT) provides a ligand contact to ATP. The short motif at 278–281 (DEAH) is the DEAH box element. A Helicase C-terminal domain is found at 473–627 (RVDWLIDTLK…TCPTGNALQH (155 aa)).

The protein belongs to the SNF2/RAD54 helicase family. RapA subfamily. In terms of assembly, interacts with the RNAP. Has a higher affinity for the core RNAP than for the holoenzyme. Its ATPase activity is stimulated by binding to RNAP.

Transcription regulator that activates transcription by stimulating RNA polymerase (RNAP) recycling in case of stress conditions such as supercoiled DNA or high salt concentrations. Probably acts by releasing the RNAP, when it is trapped or immobilized on tightly supercoiled DNA. Does not activate transcription on linear DNA. Probably not involved in DNA repair. This is RNA polymerase-associated protein RapA from Pseudomonas putida (strain ATCC 700007 / DSM 6899 / JCM 31910 / BCRC 17059 / LMG 24140 / F1).